Here is a 439-residue protein sequence, read N- to C-terminus: Histidinol dehydrogenase (439 aa).

NAD(+)-binding residues include Tyr127, Gln185, and Asn208. Positions 234, 256, and 259 each coordinate substrate. Residues Gln256 and His259 each contribute to the Zn(2+) site. Catalysis depends on proton acceptor residues Glu323 and His324. Substrate-binding residues include His324, Asp357, Glu411, and His416. Position 357 (Asp357) interacts with Zn(2+). Position 416 (His416) interacts with Zn(2+).

It belongs to the histidinol dehydrogenase family. Zn(2+) is required as a cofactor.

It carries out the reaction L-histidinol + 2 NAD(+) + H2O = L-histidine + 2 NADH + 3 H(+). It functions in the pathway amino-acid biosynthesis; L-histidine biosynthesis; L-histidine from 5-phospho-alpha-D-ribose 1-diphosphate: step 9/9. In terms of biological role, catalyzes the sequential NAD-dependent oxidations of L-histidinol to L-histidinaldehyde and then to L-histidine. The chain is Histidinol dehydrogenase from Aliivibrio fischeri (strain ATCC 700601 / ES114) (Vibrio fischeri).